Here is a 213-residue protein sequence, read N- to C-terminus: Large ribosomal subunit protein uL1 (213 aa).

The protein belongs to the universal ribosomal protein uL1 family. As to quaternary structure, part of the 50S ribosomal subunit.

Binds directly to 23S rRNA. Probably involved in E site tRNA release. Its function is as follows. Protein L1 is also a translational repressor protein, it controls the translation of its operon by binding to its mRNA. The chain is Large ribosomal subunit protein uL1 from Methanosarcina barkeri (strain Fusaro / DSM 804).